A 273-amino-acid chain; its full sequence is Putative ankyrin repeat protein RBE_0317 (273 aa).

ANK repeat units follow at residues 31 to 60, 93 to 123, 127 to 157, 161 to 191, and 195 to 225; these read LGKE…DFYS, NGNT…EVNT, GGNS…NVNE, YGDT…DVNE, and QGET…DTKQ.

This Rickettsia bellii (strain RML369-C) protein is Putative ankyrin repeat protein RBE_0317.